The chain runs to 1230 residues: Serine/threonine-protein kinase PDK1 (1230 aa).

The interval 1-277 is disordered; that stretch reads MASSHFGPAS…ASSGALKKHS (277 aa). Residues 34–50 show a composition bias toward low complexity; it reads SSSSSSRSTTTCSSTSS. Polar residues predominate over residues 62 to 76; the sequence is ETSTAATSRSQLPSN. Basic and acidic residues predominate over residues 77–87; the sequence is RHSENEAEHDT. 2 stretches are compositionally biased toward polar residues: residues 107–117 and 140–175; these read PRSNRLGTSPQ and SKRQ…SSTI. The span at 185–202 shows a compositional bias: basic and acidic residues; sequence PNDRLSHDRESHSAERPR. The span at 217–226 shows a compositional bias: polar residues; the sequence is STPSSPTNSY. The segment covering 252-262 has biased composition (basic and acidic residues); sequence ARDGDDRERRQ. The 521-residue stretch at 281–801 folds into the Protein kinase domain; the sequence is WVLGEELGVG…ITFIKTHPFF (521 aa). ATP is bound by residues 291–293 and lysine 319; that span reads SYS. 2 disordered regions span residues 345-522 and 534-597; these read LSDP…RSGA and TLPP…KMSA. Polar residues-rich tracts occupy residues 378–397 and 408–433; these read TASI…TVSN and IVTT…SPTA. Composition is skewed to basic and acidic residues over residues 466-494 and 502-521; these read GGED…DNMT and VREE…ERSG. Residues 535–544 are compositionally biased toward pro residues; the sequence is LPPPQIPSTP. Positions 555-569 are enriched in basic and acidic residues; the sequence is DGHRTSRETPRDRPH. ATP-binding positions include 621 to 623 and glutamate 627; that span reads SLA. Aspartate 666 functions as the Proton acceptor in the catalytic mechanism. Residues glutamate 670 and aspartate 684 each contribute to the ATP site. Residues 850–859 show a composition bias toward acidic residues; the sequence is EDEDGFEYDA. Disordered stretches follow at residues 850–871, 907–955, 972–1035, and 1116–1152; these read EDED…GGAV, LGED…GGNR, GGGM…SDEA, and EADG…GGGH. Over residues 927–942 the composition is skewed to basic and acidic residues; sequence GKREKEVEKKKGEKAR. 3 stretches are compositionally biased toward low complexity: residues 977–992, 1002–1030, and 1120–1137; these read GSAT…RTPG, RPGS…GASM, and DPAG…SHVE. Over residues 1138–1152 the composition is skewed to gly residues; it reads SGGGGVGGGGRGGGH.

It belongs to the protein kinase superfamily. AGC Ser/Thr protein kinase family. PDPK1 subfamily.

It catalyses the reaction L-seryl-[protein] + ATP = O-phospho-L-seryl-[protein] + ADP + H(+). The catalysed reaction is L-threonyl-[protein] + ATP = O-phospho-L-threonyl-[protein] + ADP + H(+). Its function is as follows. Serine/threonine-protein kinase that functions in the sphingolipid-mediated signaling pathway, regulating organization of the plasma membrane. May phosphorylate PKC1 to activate the cell integrity MAPK cascade during cell wall and membrane stress. May regulate sphingolipid metabolism upstream of YPK1. The polypeptide is Serine/threonine-protein kinase PDK1 (Cryptococcus neoformans var. grubii serotype A (strain H99 / ATCC 208821 / CBS 10515 / FGSC 9487) (Filobasidiella neoformans var. grubii)).